A 347-amino-acid polypeptide reads, in one-letter code: S-adenosylmethionine:tRNA ribosyltransferase-isomerase (347 aa).

Belongs to the QueA family. As to quaternary structure, monomer.

It is found in the cytoplasm. It catalyses the reaction 7-aminomethyl-7-carbaguanosine(34) in tRNA + S-adenosyl-L-methionine = epoxyqueuosine(34) in tRNA + adenine + L-methionine + 2 H(+). It participates in tRNA modification; tRNA-queuosine biosynthesis. Functionally, transfers and isomerizes the ribose moiety from AdoMet to the 7-aminomethyl group of 7-deazaguanine (preQ1-tRNA) to give epoxyqueuosine (oQ-tRNA). The sequence is that of S-adenosylmethionine:tRNA ribosyltransferase-isomerase from Pseudomonas aeruginosa (strain UCBPP-PA14).